The primary structure comprises 230 residues: Cytidylate kinase (230 aa).

12–20 (GPSGAGKGT) contacts ATP.

The protein belongs to the cytidylate kinase family. Type 1 subfamily.

Its subcellular location is the cytoplasm. The catalysed reaction is CMP + ATP = CDP + ADP. It catalyses the reaction dCMP + ATP = dCDP + ADP. The sequence is that of Cytidylate kinase from Shewanella sp. (strain MR-4).